We begin with the raw amino-acid sequence, 168 residues long: Protein-export protein SecB (168 aa).

The protein belongs to the SecB family. As to quaternary structure, homotetramer, a dimer of dimers. One homotetramer interacts with 1 SecA dimer.

The protein localises to the cytoplasm. Its function is as follows. One of the proteins required for the normal export of preproteins out of the cell cytoplasm. It is a molecular chaperone that binds to a subset of precursor proteins, maintaining them in a translocation-competent state. It also specifically binds to its receptor SecA. This is Protein-export protein SecB from Thioalkalivibrio sulfidiphilus (strain HL-EbGR7).